The sequence spans 217 residues: Putative cobalt transport protein CbiM (217 aa).

The next 6 membrane-spanning stretches (helical) occupy residues 8–28 (LPPE…VYGA), 44–64 (LIAV…PSVT), 74–94 (GIAV…IVLL), 107–127 (TLGA…WIAF), 139–161 (VFAA…LALA), and 181–201 (IFAV…VMLV).

The protein belongs to the CbiM family. Forms an energy-coupling factor (ECF) transporter complex composed of an ATP-binding protein (A component, CbiO), a transmembrane protein (T component, CbiQ) and 2 possible substrate-capture proteins (S components, CbiM and CbiN) of unknown stoichimetry.

The protein resides in the cell membrane. The protein operates within cofactor biosynthesis; adenosylcobalamin biosynthesis. Functionally, part of the energy-coupling factor (ECF) transporter complex CbiMNOQ involved in cobalt import. The protein is Putative cobalt transport protein CbiM of Archaeoglobus fulgidus (strain ATCC 49558 / DSM 4304 / JCM 9628 / NBRC 100126 / VC-16).